A 296-amino-acid polypeptide reads, in one-letter code: ATP synthase gamma chain (296 aa).

It belongs to the ATPase gamma chain family. F-type ATPases have 2 components, CF(1) - the catalytic core - and CF(0) - the membrane proton channel. CF(1) has five subunits: alpha(3), beta(3), gamma(1), delta(1), epsilon(1). CF(0) has three main subunits: a, b and c.

It localises to the cell inner membrane. In terms of biological role, produces ATP from ADP in the presence of a proton gradient across the membrane. The gamma chain is believed to be important in regulating ATPase activity and the flow of protons through the CF(0) complex. The protein is ATP synthase gamma chain of Jannaschia sp. (strain CCS1).